The following is a 211-amino-acid chain: Shikimate kinase (211 aa).

Residues 1–13 (MNASANLCAASAN) are compositionally biased toward low complexity. Residues 1–24 (MNASANLCAASANDPQPGDQEAAH) are disordered. 50–55 (GAGKTT) is a binding site for ATP. Thr-54 is a Mg(2+) binding site. Residues Asp-72, Arg-96, and Gly-118 each coordinate substrate. Residue Arg-156 participates in ATP binding. Arg-175 contacts substrate.

Belongs to the shikimate kinase family. Monomer. It depends on Mg(2+) as a cofactor.

The protein localises to the cytoplasm. The enzyme catalyses shikimate + ATP = 3-phosphoshikimate + ADP + H(+). Its pathway is metabolic intermediate biosynthesis; chorismate biosynthesis; chorismate from D-erythrose 4-phosphate and phosphoenolpyruvate: step 5/7. Catalyzes the specific phosphorylation of the 3-hydroxyl group of shikimic acid using ATP as a cosubstrate. This chain is Shikimate kinase, found in Bordetella parapertussis (strain 12822 / ATCC BAA-587 / NCTC 13253).